The primary structure comprises 250 residues: Lymphotoxin-beta (250 aa).

Residues 1–26 (MGAPGLETRAGGPNGKSYLLLASVGA) lie on the Cytoplasmic side of the membrane. A helical; Signal-anchor for type II membrane protein membrane pass occupies residues 27–47 (AVLGTLLLSVPITVLTVLALM). Over 48 to 250 (PQEQGGQVAD…KTFFGAVMVG (203 aa)) the chain is Extracellular. In terms of domain architecture, THD spans 87–249 (PAAHLIGIAK…GKTFFGAVMV (163 aa)). An N-linked (GlcNAc...) asparagine glycan is attached at Asn-228.

This sequence belongs to the tumor necrosis factor family. In terms of assembly, heterotrimer of either two LTB and one LTA subunits or (less prevalent) two LTA and one LTB subunits.

It is found in the membrane. In terms of biological role, cytokine that binds to LTBR/TNFRSF3. May play a specific role in immune response regulation. Provides the membrane anchor for the attachment of the heterotrimeric complex to the cell surface. The sequence is that of Lymphotoxin-beta (LTB) from Notamacropus eugenii (Tammar wallaby).